The following is a 458-amino-acid chain: UDP-N-acetylmuramoylalanine--D-glutamate ligase (458 aa).

124–130 (GSDGKTT) provides a ligand contact to ATP.

Belongs to the MurCDEF family.

It is found in the cytoplasm. The enzyme catalyses UDP-N-acetyl-alpha-D-muramoyl-L-alanine + D-glutamate + ATP = UDP-N-acetyl-alpha-D-muramoyl-L-alanyl-D-glutamate + ADP + phosphate + H(+). The protein operates within cell wall biogenesis; peptidoglycan biosynthesis. Functionally, cell wall formation. Catalyzes the addition of glutamate to the nucleotide precursor UDP-N-acetylmuramoyl-L-alanine (UMA). This chain is UDP-N-acetylmuramoylalanine--D-glutamate ligase, found in Clostridium botulinum (strain Kyoto / Type A2).